Here is a 313-residue protein sequence, read N- to C-terminus: Small glutamine-rich tetratricopeptide repeat-containing protein alpha (313 aa).

Residues Ala-66 to Glu-100 form a disordered region. Residue Ser-77 is modified to Phosphoserine. Thr-81 bears the Phosphothreonine mark. Position 84 is a phosphoserine (Ser-84). The span at Glu-90–Glu-100 shows a compositional bias: basic and acidic residues. TPR repeat units follow at residues Ala-91 to Asn-124, Ala-125 to Tyr-158, and Ser-159 to Asn-192. Position 137 is an N6-acetyllysine (Lys-137). Residues Met-250–Asp-269 are disordered. At Ser-301 the chain carries Phosphoserine. A Phosphothreonine modification is found at Thr-303. The residue at position 305 (Ser-305) is a Phosphoserine.

Belongs to the SGT family. Homodimer. Homooligomer. Interacts with DNAJC5 and DNAJC5B. Interacts (via TPR repeats) with HSP90AA1. Interacts (via Gln-rich region) with SLC2A1. Interacts with HSP90AB1. Interacts (via TPR repeats) with HSPA8/Hsc70; the interaction is direct. Interacts with BAG6 (via ubiquitin-like domain); interaction prevents interaction between BAG6 and RNF126. Forms a multiprotein complex, at least composed of DNAJB12, DNAJB14, HSPA8/Hsc70 and SGTA; interaction with DNAJB14 and HSPA8/Hsc70 is direct. As to quaternary structure, (Microbial infection) Interacts with Vpu and Gag from HIV-1. In terms of assembly, (Microbial infection) Interacts with SARS-CoV accessory protein 7a. As to expression, ubiquitous.

The protein localises to the cytoplasm. The protein resides in the nucleus. Co-chaperone that binds misfolded and hydrophobic patches-containing client proteins in the cytosol. Mediates their targeting to the endoplasmic reticulum but also regulates their sorting to the proteasome when targeting fails. Functions in tail-anchored/type II transmembrane proteins membrane insertion constituting with ASNA1 and the BAG6 complex a targeting module. Functions upstream of the BAG6 complex and ASNA1, binding more rapidly the transmembrane domain of newly synthesized proteins. It is also involved in the regulation of the endoplasmic reticulum-associated misfolded protein catabolic process via its interaction with BAG6: collaborates with the BAG6 complex to maintain hydrophobic substrates in non-ubiquitinated states. Competes with RNF126 for interaction with BAG6, preventing the ubiquitination of client proteins associated with the BAG6 complex. Binds directly to HSC70 and HSP70 and regulates their ATPase activity. Functionally, (Microbial infection) In case of infection by polyomavirus, involved in the virus endoplasmic reticulum membrane penetration and infection via interaction with DNAJB12, DNAJB14 and HSPA8/Hsc70. The chain is Small glutamine-rich tetratricopeptide repeat-containing protein alpha (SGTA) from Homo sapiens (Human).